Consider the following 287-residue polypeptide: Pirin-1 (287 aa).

Residue Thr-2 is modified to N-acetylthreonine.

It belongs to the pirin family. As to quaternary structure, interacts with the G protein alpha-1 subunit GPA1. Interacts with NFYB6 and NFYB9.

The protein resides in the nucleus. Involved in abscisic acid signal transduction. Plays a role in seed germination and early seedling development. Involved in the blue light (BL) signaling. The protein is Pirin-1 (PRN1) of Arabidopsis thaliana (Mouse-ear cress).